The chain runs to 589 residues: Mitogen-activated protein kinase 8 (589 aa).

The disordered stretch occupies residues 18 to 56 (RPSSSSSSSSSNNNNNNHEQPIFNSSSFSSSSNPNHSAN). 2 stretches are compositionally biased toward low complexity: residues 20–34 (SSSS…NNNN) and 41–56 (NSSS…HSAN). Positions 104 to 395 (YQIQEVVGKG…AEDALADPYF (292 aa)) constitute a Protein kinase domain. Residues 110–118 (VGKGSYGVV) and Lys133 each bind ATP. Asp230 (proton acceptor) is an active-site residue. Phosphothreonine is present on Thr266. The TXY signature appears at 266 to 268 (TDY). The residue at position 268 (Tyr268) is a Phosphotyrosine. A Phosphothreonine modification is found at Thr271. Residues 474 to 589 (NQGKPGAAGG…TDKVASLHNS (116 aa)) are disordered.

This sequence belongs to the protein kinase superfamily. CMGC Ser/Thr protein kinase family. MAP kinase subfamily. As to quaternary structure, interacts with CAM3, CAM4 and CAM7 in an calcium-dependent manner. In terms of processing, dually phosphorylated on Thr-266 and Tyr-268, which activates the enzyme. Autophosphorylated. In terms of tissue distribution, ubiquitous.

The enzyme catalyses L-seryl-[protein] + ATP = O-phospho-L-seryl-[protein] + ADP + H(+). It carries out the reaction L-threonyl-[protein] + ATP = O-phospho-L-threonyl-[protein] + ADP + H(+). Activated by threonine and tyrosine phosphorylation. Activated by two independent mechanisms, the binding of CAMs in a calcium-dependent manner and the phosphorylation by MAP kinase kinase MKK3. Activated in response to mechanical wounding, hydrogen peroxide and jasmonic acid (JA). Its function is as follows. MKK3-MPK8 and CAMs-MPK8 modules negatively regulates ROS accumulation through controlling expression of the RBOHD gene during wounding. This Arabidopsis thaliana (Mouse-ear cress) protein is Mitogen-activated protein kinase 8 (MPK8).